A 284-amino-acid polypeptide reads, in one-letter code: Bifunctional protein FolD (284 aa).

166-168 is an NADP(+) binding site; that stretch reads GAS.

Belongs to the tetrahydrofolate dehydrogenase/cyclohydrolase family. Homodimer.

The catalysed reaction is (6R)-5,10-methylene-5,6,7,8-tetrahydrofolate + NADP(+) = (6R)-5,10-methenyltetrahydrofolate + NADPH. It catalyses the reaction (6R)-5,10-methenyltetrahydrofolate + H2O = (6R)-10-formyltetrahydrofolate + H(+). It participates in one-carbon metabolism; tetrahydrofolate interconversion. Functionally, catalyzes the oxidation of 5,10-methylenetetrahydrofolate to 5,10-methenyltetrahydrofolate and then the hydrolysis of 5,10-methenyltetrahydrofolate to 10-formyltetrahydrofolate. The sequence is that of Bifunctional protein FolD from Legionella pneumophila (strain Corby).